We begin with the raw amino-acid sequence, 169 residues long: Protein-export protein SecB (169 aa).

It belongs to the SecB family. In terms of assembly, homotetramer, a dimer of dimers. One homotetramer interacts with 1 SecA dimer.

The protein localises to the cytoplasm. Functionally, one of the proteins required for the normal export of preproteins out of the cell cytoplasm. It is a molecular chaperone that binds to a subset of precursor proteins, maintaining them in a translocation-competent state. It also specifically binds to its receptor SecA. In Alteromonas mediterranea (strain DSM 17117 / CIP 110805 / LMG 28347 / Deep ecotype), this protein is Protein-export protein SecB.